The sequence spans 62 residues: Photosystem II reaction center protein Z (62 aa).

The next 2 helical transmembrane spans lie at 8–28 (AVFA…VVFA) and 41–61 (FSGT…NSLI).

Belongs to the PsbZ family. As to quaternary structure, PSII is composed of 1 copy each of membrane proteins PsbA, PsbB, PsbC, PsbD, PsbE, PsbF, PsbH, PsbI, PsbJ, PsbK, PsbL, PsbM, PsbT, PsbY, PsbZ, Psb30/Ycf12, at least 3 peripheral proteins of the oxygen-evolving complex and a large number of cofactors. It forms dimeric complexes.

The protein resides in the plastid. The protein localises to the chloroplast thylakoid membrane. May control the interaction of photosystem II (PSII) cores with the light-harvesting antenna, regulates electron flow through the 2 photosystem reaction centers. PSII is a light-driven water plastoquinone oxidoreductase, using light energy to abstract electrons from H(2)O, generating a proton gradient subsequently used for ATP formation. The chain is Photosystem II reaction center protein Z from Morus indica (Mulberry).